The primary structure comprises 405 residues: Argininosuccinate synthase (405 aa).

ATP-binding positions include 10–18 (AYSGGLDTS) and Ala-37. Positions 88 and 93 each coordinate L-citrulline. ATP is bound at residue Gly-118. Positions 120, 124, and 125 each coordinate L-aspartate. Asn-124 contributes to the L-citrulline binding site. L-citrulline contacts are provided by Arg-128, Ser-177, Ser-186, Glu-263, and Tyr-275.

It belongs to the argininosuccinate synthase family. Type 1 subfamily. Homotetramer.

The protein resides in the cytoplasm. The enzyme catalyses L-citrulline + L-aspartate + ATP = 2-(N(omega)-L-arginino)succinate + AMP + diphosphate + H(+). Its pathway is amino-acid biosynthesis; L-arginine biosynthesis; L-arginine from L-ornithine and carbamoyl phosphate: step 2/3. The sequence is that of Argininosuccinate synthase from Acetivibrio thermocellus (strain ATCC 27405 / DSM 1237 / JCM 9322 / NBRC 103400 / NCIMB 10682 / NRRL B-4536 / VPI 7372) (Clostridium thermocellum).